Reading from the N-terminus, the 938-residue chain is Probable outer membrane protein pmp15 (938 aa).

Positions 1-17 are cleaved as a signal peptide; that stretch reads MRFFCFGMLLPFTFVLA. The region spanning 659 to 938 is the Autotransporter domain; sequence DEEKGHAASL…YLNVASRMRF (280 aa).

Belongs to the PMP outer membrane protein family.

The protein resides in the secreted. The protein localises to the cell wall. It localises to the cell outer membrane. The protein is Probable outer membrane protein pmp15 (pmp15) of Chlamydia pneumoniae (Chlamydophila pneumoniae).